A 182-amino-acid polypeptide reads, in one-letter code: MKLTSTAALASLAVAATAAPSTPETFGLVAIRSGDAVQYAGFNAALGSIFAGLPKQNATCEGTDSGFATFYIKDGALYLYGSEETQEIYVDRSGMGQGLIGYTTGDNASGPRNSERTGWSIDENNHLVFDGNSLIACPNSIDSAYSIWASAGVANPGGNKDCVGIAARVEKTENPIACTYSS.

Positions 1-18 are cleaved as a signal peptide; sequence MKLTSTAALASLAVAATA. Residues N57 and N107 are each glycosylated (N-linked (GlcNAc...) asparagine).

Belongs to the phiA family. As to expression, mainly present in phialides and conidia.

Its subcellular location is the secreted. It localises to the cell wall. Cell wall protein involved in development of asexual structures such as phialide and conidium development, and thus required for spore formation. Plays a role as a general stress protectant produced by the fungus in competition with antagonistic bacteria. In Emericella nidulans (strain FGSC A4 / ATCC 38163 / CBS 112.46 / NRRL 194 / M139) (Aspergillus nidulans), this protein is Cell wall protein phiA.